Here is a 643-residue protein sequence, read N- to C-terminus: tRNA 5-methylaminomethyl-2-thiouridine biosynthesis bifunctional protein MnmC (643 aa).

The tract at residues 1-223 (MPDRLVSATL…VDDRLVGDYA (223 aa)) is tRNA (mnm(5)s(2)U34)-methyltransferase. The tract at residues 247–643 (IGAGLAGCAV…LRARRVGSAG (397 aa)) is FAD-dependent cmnm(5)s(2)U34 oxidoreductase.

This sequence in the N-terminal section; belongs to the methyltransferase superfamily. tRNA (mnm(5)s(2)U34)-methyltransferase family. It in the C-terminal section; belongs to the DAO family. FAD serves as cofactor.

It is found in the cytoplasm. The enzyme catalyses 5-aminomethyl-2-thiouridine(34) in tRNA + S-adenosyl-L-methionine = 5-methylaminomethyl-2-thiouridine(34) in tRNA + S-adenosyl-L-homocysteine + H(+). In terms of biological role, catalyzes the last two steps in the biosynthesis of 5-methylaminomethyl-2-thiouridine (mnm(5)s(2)U) at the wobble position (U34) in tRNA. Catalyzes the FAD-dependent demodification of cmnm(5)s(2)U34 to nm(5)s(2)U34, followed by the transfer of a methyl group from S-adenosyl-L-methionine to nm(5)s(2)U34, to form mnm(5)s(2)U34. The sequence is that of tRNA 5-methylaminomethyl-2-thiouridine biosynthesis bifunctional protein MnmC from Burkholderia cenocepacia (strain HI2424).